The primary structure comprises 385 residues: FK506-binding protein 5 (385 aa).

The region spanning 26–115 (TNFVSVHYDA…RFEVELIGFW (90 aa)) is the PPIase FKBP-type domain. 3 TPR repeats span residues 128-161 (AEKKKNEGNALFKLDAIESALFAYRKGREYIQDL), 177-210 (VSIQLNIGACHLKLKHYDHAIEVCQKALDRDMTK), and 211-244 (IKAYYRIGQAYMEKGDYESSLTFIRIGLETAIGL).

The enzyme catalyses [protein]-peptidylproline (omega=180) = [protein]-peptidylproline (omega=0). With respect to regulation, inhibited by both FK506 and rapamycin. PPIases accelerate the folding of proteins. It catalyzes the cis-trans isomerization of proline imidic peptide bonds in oligopeptides. This is FK506-binding protein 5 (FKBP5) from Rhizopus delemar (strain RA 99-880 / ATCC MYA-4621 / FGSC 9543 / NRRL 43880) (Mucormycosis agent).